The chain runs to 507 residues: Fumarate hydratase, mitochondrial (507 aa).

The transit peptide at 1–41 directs the protein to the mitochondrion; sequence MYRALRLLARSRRLLRVPSAGAAVSGEATTLPRCAPNVARM. An N6-acetyllysine; alternate mark is found at K58, K63, and K77. Residues K58, K63, and K77 each carry the N6-succinyllysine; alternate modification. At T82 the chain carries Phosphothreonine. N6-acetyllysine; alternate occurs at positions 112 and 119. K112 and K119 each carry N6-succinyllysine; alternate. Residues 142–144, 173–176, and 183–185 each bind substrate; these read SGT, HPND, and SSN. K210 is subject to N6-acetyllysine. K220 bears the N6-acetyllysine; alternate mark. K220 is modified (N6-succinyllysine; alternate). T231 provides a ligand contact to substrate. The active-site Proton donor/acceptor is H232. T233 bears the Phosphothreonine mark. K289 carries the post-translational modification N6-acetyllysine; alternate. K289 bears the N6-succinyllysine; alternate mark. S362 is an active-site residue. Substrate-binding positions include S363 and 368-370; that span reads KVN. The residue at position 363 (S363) is a Phosphoserine. An N6-succinyllysine mark is found at K464 and K470. K499 is subject to N6-acetyllysine.

Belongs to the class-II fumarase/aspartase family. Fumarase subfamily. As to quaternary structure, homotetramer. Interacts with H2AZ1. Post-translationally, phosphorylation at Thr-233 by PRKDC in response to DNA damage promotes translocation to the nucleus and recruitment to DNA double-strand breaks (DSBs).

It is found in the mitochondrion. It localises to the cytoplasm. The protein resides in the cytosol. Its subcellular location is the nucleus. The protein localises to the chromosome. It catalyses the reaction (S)-malate = fumarate + H2O. It functions in the pathway carbohydrate metabolism; tricarboxylic acid cycle; (S)-malate from fumarate: step 1/1. Functionally, catalyzes the reversible stereospecific interconversion of fumarate to L-malate. Experiments in different species have demonstrated that specific isoforms of this protein act in defined pathways and favor one direction over the other. In terms of biological role, catalyzes the hydration of fumarate to L-malate in the tricarboxylic acid (TCA) cycle to facilitate a transition step in the production of energy in the form of NADH. Catalyzes the dehydration of L-malate to fumarate. Fumarate metabolism in the cytosol plays a role during urea cycle and arginine metabolism; fumarate being a by-product of the urea cycle and amino-acid catabolism. Also plays a role in DNA repair by promoting non-homologous end-joining (NHEJ). In response to DNA damage and phosphorylation by PRKDC, translocates to the nucleus and accumulates at DNA double-strand breaks (DSBs): acts by catalyzing formation of fumarate, an inhibitor of KDM2B histone demethylase activity, resulting in enhanced dimethylation of histone H3 'Lys-36' (H3K36me2). The sequence is that of Fumarate hydratase, mitochondrial from Mus musculus (Mouse).